Here is a 200-residue protein sequence, read N- to C-terminus: MASKIETLKANLEAALGARVVSLTEAIGELTLVVKASDYLDVATTLRDDPKLRFEQLIDLCGVDYQTYGDGAYDGPRFAAVTHLLSVTNNWRLRLRVFAPDDDLPIVPSLVDIWNSANWYEREAFDLYGIVFEGHPDLRRILTDYGFIGHPFRKDFPVSGYVEMRYDPEEKRVVYQPVTIEPREITPRVIREDRYGGLKH.

Belongs to the complex I 30 kDa subunit family. As to quaternary structure, NDH-1 is composed of 14 different subunits. Subunits NuoB, C, D, E, F, and G constitute the peripheral sector of the complex.

The protein resides in the cell inner membrane. It carries out the reaction a quinone + NADH + 5 H(+)(in) = a quinol + NAD(+) + 4 H(+)(out). In terms of biological role, NDH-1 shuttles electrons from NADH, via FMN and iron-sulfur (Fe-S) centers, to quinones in the respiratory chain. The immediate electron acceptor for the enzyme in this species is believed to be ubiquinone. Couples the redox reaction to proton translocation (for every two electrons transferred, four hydrogen ions are translocated across the cytoplasmic membrane), and thus conserves the redox energy in a proton gradient. The polypeptide is NADH-quinone oxidoreductase subunit C (Burkholderia multivorans (strain ATCC 17616 / 249)).